The sequence spans 2472 residues: Spectrin alpha chain, non-erythrocytic 1 (2472 aa).

Residue methionine 1 is modified to N-acetylmethionine. Spectrin repeat units lie at residues 45-146, 150-251, 256-358, 361-465, 468-570, 574-676, 679-781, 785-888, and 891-961; these read RFQF…IKLL, KLVQ…QGKL, EVQR…ARLD, YRLQ…QYEQ, DLQL…AQLA, HLQQ…KLRE, QQQQ…QKLA, RLQQ…DLED, and QAQQ…QQVA. A Phosphoserine modification is found at serine 587. Lysine 637 is modified (N6-acetyllysine). Lysine 803 is subject to N6-acetyllysine. Phosphoserine is present on residues serine 924, serine 982, serine 999, serine 1029, serine 1031, and serine 1041. One can recognise an SH3 domain in the interval 967 to 1026; it reads TGKELVLALYDYQEKSPREVTMKKGDILTLLNSTNKDWWKVEVNDRQGFVPAAYVKKLDP. The stretch at 1096–1166 is one Spectrin 10 repeat; sequence LFREANELQQ…LESEGLMAEE (71 aa). Tyrosine 1176 is modified (phosphotyrosine). Phosphoserine is present on residues serine 1190, serine 1207, serine 1217, serine 1291, serine 1306, serine 1323, and serine 1338. The Spectrin 11 repeat unit spans residues 1233–1336; that stretch reads HEVQRFHRDA…RADQRKAKLG (104 aa). Spectrin repeat units lie at residues 1339–1441 and 1446–1549; these read HDLQ…RMML and ELQL…KLGE. The residue at position 1519 (lysine 1519) is an N6-acetyllysine. 5 positions are modified to phosphoserine: serine 1550, serine 1557, serine 1578, serine 1615, and serine 1647. Spectrin repeat units lie at residues 1552–1656, 1659–1762, 1764–1868, 1871–1974, 1978–2081, 2092–2194, and 2206–2310; these read TLQQ…KLKE, KQQN…KLSE, HRLH…RLEE, EYQQ…KLDE, FLQF…KLLE, LFLT…LELQ, and LRQE…NLEQ. Threonine 2020 bears the Phosphothreonine mark. The residue at position 2052 (lysine 2052) is an N6-acetyllysine. Threonine 2066 carries the post-translational modification Phosphothreonine. EF-hand domains follow at residues 2323-2358, 2366-2401, and 2404-2439; these read EALK…LGYD, EPDP…RETE, and KSSE…EQAD. Ca(2+) contacts are provided by aspartate 2336, aspartate 2338, serine 2340, arginine 2342, glutamate 2347, aspartate 2379, asparagine 2381, aspartate 2383, histidine 2385, and glutamate 2390. Lysine 2421 carries the N6-acetyllysine modification.

It belongs to the spectrin family. As to quaternary structure, like erythrocyte spectrin, the spectrin-like proteins are capable of forming dimers which can further associate to tetramers. Interacts (via C-terminal spectrin repeats) with TRPC4. Interacts with CALM and EMD. Interacts with isoform 1 of ACP1. Identified in a complex with ACTN4, CASK, IQGAP1, MAGI2, NPHS1 and SPTBN1. Interacts with SHANK3 (via ANK repeats). Interacts with CLN3; this interaction regulates the fodrin localization at the plasma membrane. Post-translationally, phosphorylation of Tyr-1176 decreases sensitivity to cleavage by calpain in vitro. In terms of tissue distribution, expressed in the foot process layer of podocytes in the kidney glomerulus and in tubules (at protein level).

It localises to the cytoplasm. The protein resides in the cytoskeleton. It is found in the cell cortex. Fodrin, which seems to be involved in secretion, interacts with calmodulin in a calcium-dependent manner and is thus candidate for the calcium-dependent movement of the cytoskeleton at the membrane. This chain is Spectrin alpha chain, non-erythrocytic 1 (Sptan1), found in Rattus norvegicus (Rat).